The sequence spans 471 residues: 6-phosphofructo-2-kinase/fructose-2,6-bisphosphatase 1 (471 aa).

N-acetylserine is present on serine 2. The interval 2 to 250 (SREMGELTQT…AYYLMNIHVT (249 aa)) is 6-phosphofructo-2-kinase. The residue at position 33 (serine 33) is a Phosphoserine; by PKA. An ATP-binding site is contributed by 49-57 (GLPARGKTY). Arginine 82 and arginine 105 together coordinate beta-D-fructose 6-phosphate. Residue aspartate 131 is part of the active site. Residues threonine 133 and arginine 139 each contribute to the beta-D-fructose 6-phosphate site. Serine 141 bears the Phosphoserine mark. Cysteine 161 is a catalytic residue. 170–175 (NIKQVK) serves as a coordination point for ATP. Beta-D-fructose 6-phosphate contacts are provided by lysine 175, arginine 196, and tyrosine 200. Residues 251 to 471 (PRSIYLCRHG…EALDTVPAHY (221 aa)) form a fructose-2,6-bisphosphatase region. Arginine 258 serves as a coordination point for beta-D-fructose 2,6-bisphosphate. Histidine 259 serves as the catalytic Tele-phosphohistidine intermediate. Beta-D-fructose 2,6-bisphosphate-binding residues include asparagine 265, glycine 271, and arginine 308. Glutamate 328 functions as the Proton donor/acceptor in the catalytic mechanism. Beta-D-fructose 2,6-bisphosphate-binding residues include tyrosine 339, arginine 353, lysine 357, tyrosine 368, glutamine 394, and arginine 398. ATP is bound at residue 350–353 (FALR). Residues 394-398 (QAVMR) and tyrosine 430 each bind ATP.

In the C-terminal section; belongs to the phosphoglycerate mutase family. In terms of assembly, homodimer. In terms of tissue distribution, liver.

The catalysed reaction is beta-D-fructose 2,6-bisphosphate + H2O = beta-D-fructose 6-phosphate + phosphate. It carries out the reaction beta-D-fructose 6-phosphate + ATP = beta-D-fructose 2,6-bisphosphate + ADP + H(+). With respect to regulation, phosphorylation at Ser-33 inhibits the kinase and activates the bisphosphatase. Functionally, synthesis and degradation of fructose 2,6-bisphosphate. This Mus musculus (Mouse) protein is 6-phosphofructo-2-kinase/fructose-2,6-bisphosphatase 1.